The sequence spans 753 residues: Glycerophosphodiester phosphodiesterase GDPDL6 (753 aa).

The signal sequence occupies residues 1–17 (MLRFFILFSLFLHSSVA). GP-PDE domains lie at 41-339 (PAVV…SQSI) and 355-654 (ALVI…TRYL). Residues N304, N516, N603, and N715 are each glycosylated (N-linked (GlcNAc...) asparagine). Positions 707-729 (PPVAKLASNGTEGGPPQTPPRSG) are disordered. The helical transmembrane segment at 731-751 (VAIAANLSLSLLAMMALGLLY) threads the bilayer.

Belongs to the glycerophosphoryl diester phosphodiesterase family. Expressed in flowers and siliques.

Its subcellular location is the membrane. It catalyses the reaction a sn-glycero-3-phosphodiester + H2O = an alcohol + sn-glycerol 3-phosphate + H(+). In Arabidopsis thaliana (Mouse-ear cress), this protein is Glycerophosphodiester phosphodiesterase GDPDL6.